A 62-amino-acid chain; its full sequence is uncharacterized protein (62 aa).

Positions 28–61 (KIESTHPEIAKKLKEAAEKYREVEEILKKAVDMV) form a coiled coil.

This is an uncharacterized protein from Archaeoglobus fulgidus (strain ATCC 49558 / DSM 4304 / JCM 9628 / NBRC 100126 / VC-16).